We begin with the raw amino-acid sequence, 206 residues long: Ribosomal RNA large subunit methyltransferase E (206 aa).

Residues glycine 55, tryptophan 57, aspartate 75, aspartate 91, and aspartate 116 each coordinate S-adenosyl-L-methionine. The Proton acceptor role is filled by lysine 156.

The protein belongs to the class I-like SAM-binding methyltransferase superfamily. RNA methyltransferase RlmE family.

It is found in the cytoplasm. The enzyme catalyses uridine(2552) in 23S rRNA + S-adenosyl-L-methionine = 2'-O-methyluridine(2552) in 23S rRNA + S-adenosyl-L-homocysteine + H(+). In terms of biological role, specifically methylates the uridine in position 2552 of 23S rRNA at the 2'-O position of the ribose in the fully assembled 50S ribosomal subunit. The sequence is that of Ribosomal RNA large subunit methyltransferase E from Blochmanniella floridana.